Consider the following 100-residue polypeptide: Urease subunit gamma (100 aa).

It belongs to the urease gamma subunit family. In terms of assembly, heterotrimer of UreA (gamma), UreB (beta) and UreC (alpha) subunits. Three heterotrimers associate to form the active enzyme.

It is found in the cytoplasm. It catalyses the reaction urea + 2 H2O + H(+) = hydrogencarbonate + 2 NH4(+). It participates in nitrogen metabolism; urea degradation; CO(2) and NH(3) from urea (urease route): step 1/1. In Leptothrix cholodnii (strain ATCC 51168 / LMG 8142 / SP-6) (Leptothrix discophora (strain SP-6)), this protein is Urease subunit gamma.